A 150-amino-acid polypeptide reads, in one-letter code: Large ribosomal subunit protein uL13 (150 aa).

The interval 130 to 150 (EHPHSAQNPQVLSITTNELVK) is disordered. Residues 134–150 (SAQNPQVLSITTNELVK) are compositionally biased toward polar residues.

This sequence belongs to the universal ribosomal protein uL13 family. Part of the 50S ribosomal subunit.

Functionally, this protein is one of the early assembly proteins of the 50S ribosomal subunit, although it is not seen to bind rRNA by itself. It is important during the early stages of 50S assembly. The sequence is that of Large ribosomal subunit protein uL13 from Prochlorococcus marinus (strain SARG / CCMP1375 / SS120).